Here is a 290-residue protein sequence, read N- to C-terminus: 4-hydroxybenzoate octaprenyltransferase (290 aa).

Transmembrane regions (helical) follow at residues 33–53 (LWAL…AVFV), 99–119 (LFVI…VKTI), 141–161 (LPQV…FCAV), 213–233 (LIIG…GWLN), 234–254 (GLGA…IWQQ), and 268–288 (AFLN…LSYL).

It belongs to the UbiA prenyltransferase family. Requires Mg(2+) as cofactor.

Its subcellular location is the cell inner membrane. The enzyme catalyses all-trans-octaprenyl diphosphate + 4-hydroxybenzoate = 4-hydroxy-3-(all-trans-octaprenyl)benzoate + diphosphate. It functions in the pathway cofactor biosynthesis; ubiquinone biosynthesis. Catalyzes the prenylation of para-hydroxybenzoate (PHB) with an all-trans polyprenyl group. Mediates the second step in the final reaction sequence of ubiquinone-8 (UQ-8) biosynthesis, which is the condensation of the polyisoprenoid side chain with PHB, generating the first membrane-bound Q intermediate 3-octaprenyl-4-hydroxybenzoate. The sequence is that of 4-hydroxybenzoate octaprenyltransferase from Cronobacter sakazakii (strain ATCC BAA-894) (Enterobacter sakazakii).